Consider the following 218-residue polypeptide: uncharacterized protein (218 aa).

The segment at 154–199 adopts an RING-type zinc-finger fold; sequence CFICTMEYSRTDKNLHPIILNCGHNLCRSCINKLTGNGIVKCPFDR.

This is an uncharacterized protein from Caenorhabditis elegans.